Consider the following 100-residue polypeptide: Small ribosomal subunit protein uS14c (100 aa).

It belongs to the universal ribosomal protein uS14 family. As to quaternary structure, part of the 30S ribosomal subunit.

It is found in the plastid. The protein localises to the chloroplast. Binds 16S rRNA, required for the assembly of 30S particles. This is Small ribosomal subunit protein uS14c from Coffea arabica (Arabian coffee).